A 1023-amino-acid polypeptide reads, in one-letter code: DNA polymerase (1023 aa).

The tract at residues 726-751 (QTDATRKHRQCTPTSNSSSDEDAPFY) is disordered.

Belongs to the DNA polymerase type-B family. As to quaternary structure, heterodimer with the terminal protein; this heterodimer binds to bp 9 to 18 of the genome. Forms a complex with viral pTP, DBP and hosts NFIA and POU2F1/OCT1 for initiation of replication.

The protein localises to the host nucleus. The catalysed reaction is DNA(n) + a 2'-deoxyribonucleoside 5'-triphosphate = DNA(n+1) + diphosphate. Its function is as follows. Eukaryotic-type DNA polymerase involved in viral genomic replication. DNA synthesis is protein primed, and acts in a strand displacement replication. Assembles in complex with viral pTP, DBP, host NFIA and host POU2F1/OCT1 on viral origin of replication. The polymerase covalently transfers dCMP onto pTP, thereby initiating complementary strand synthesis. This is DNA polymerase from Bovine adenovirus B serotype 3 (BAdV-3).